Here is a 202-residue protein sequence, read N- to C-terminus: Solute carrier family 66 member 3 (202 aa).

An N-terminal signal peptide occupies residues 1–19 (MEAALLGLCNWSTLGVCAA). Helical transmembrane passes span 33 to 53 (SARG…LVFL), 64 to 84 (LTYL…LCIF), 97 to 117 (IAVL…IDLA), and 171 to 191 (FTIL…TVTV).

The protein localises to the membrane. This Homo sapiens (Human) protein is Solute carrier family 66 member 3.